We begin with the raw amino-acid sequence, 525 residues long: Ribosomal protein S6 kinase beta-1 (525 aa).

Positions Met-1 to Met-54 are disordered. The short motif at Phe-28–Leu-32 is the TOS motif element. The segment covering Ile-30–Glu-46 has biased composition (acidic residues). In terms of domain architecture, Protein kinase spans Phe-91 to Phe-352. ATP-binding positions include Leu-97–Val-105 and Lys-123. Asp-218 (proton acceptor) is an active-site residue. Phosphothreonine; by PDPK1 is present on Thr-252. The AGC-kinase C-terminal domain maps to Arg-353 to Lys-423. Residues Ser-380 to Thr-399 form a disordered region. The span at Gln-381–Thr-399 shows a compositional bias: polar residues. Ser-394 bears the Phosphoserine mark. Thr-412 is modified (phosphothreonine; by MTOR, NEK6 and NEK7). The interval Glu-424–Leu-525 is autoinhibitory domain. Phosphoserine occurs at positions 434 and 441. Phosphothreonine is present on Thr-444. Phosphoserine is present on residues Ser-447 and Ser-452. The segment at Val-486–Gln-509 is disordered. Lys-516 carries the post-translational modification N6-acetyllysine.

Belongs to the protein kinase superfamily. AGC Ser/Thr protein kinase family. S6 kinase subfamily. Interacts with PPP1R9A/neurabin-1. Interacts with RPTOR. Interacts with IRS1. Interacts with EIF3B and EIF3C. Interacts with TRAF4. Interacts with POLDIP3. Interacts (via N-terminus) with IER5. In terms of processing, phosphorylation at Thr-412 is regulated by mTORC1. The phosphorylation at this site is maintained by an agonist-dependent autophosphorylation mechanism. Activated by phosphorylation at Thr-252 by PDPK1. Dephosphorylation by PPP1CC at Thr-412 in mitochondrion.

The protein localises to the cytoplasm. It localises to the synapse. It is found in the synaptosome. Its subcellular location is the mitochondrion outer membrane. The protein resides in the mitochondrion. It carries out the reaction L-seryl-[protein] + ATP = O-phospho-L-seryl-[protein] + ADP + H(+). The catalysed reaction is L-threonyl-[protein] + ATP = O-phospho-L-threonyl-[protein] + ADP + H(+). Its activity is regulated as follows. Activation requires multiple phosphorylation events on serine/threonine residues. Activation appears to be first mediated by phosphorylation of multiple sites in the autoinhibitory domain, which facilitates phosphorylation at Thr-412, disrupting the autoinhibitory mechanism and allowing phosphorylation of Thr-252 by PDPK1. The active conformation of the kinase is believed to be stabilized by a mechanism involving three conserved phosphorylation sites located in the kinase domain activation loop (Thr-252) and in the AGC-kinase C-terminal domain (Ser-394 in the middle of the tail/linker region and Thr-412 within a hydrophobic motif at its end). Activated by mTORC1; isoform Alpha I and isoform Alpha II are sensitive to rapamycin, which inhibits activating phosphorylation at Thr-412. Activated by PDPK1. In terms of biological role, serine/threonine-protein kinase that acts downstream of mTOR signaling in response to growth factors and nutrients to promote cell proliferation, cell growth and cell cycle progression. Regulates protein synthesis through phosphorylation of EIF4B, RPS6 and EEF2K, and contributes to cell survival by repressing the pro-apoptotic function of BAD. Under conditions of nutrient depletion, the inactive form associates with the EIF3 translation initiation complex. Upon mitogenic stimulation, phosphorylation by the mechanistic target of rapamycin complex 1 (mTORC1) leads to dissociation from the EIF3 complex and activation. The active form then phosphorylates and activates several substrates in the pre-initiation complex, including the EIF2B complex and the cap-binding complex component EIF4B. Also controls translation initiation by phosphorylating a negative regulator of EIF4A, PDCD4, targeting it for ubiquitination and subsequent proteolysis. Promotes initiation of the pioneer round of protein synthesis by phosphorylating POLDIP3/SKAR. In response to IGF1, activates translation elongation by phosphorylating EEF2 kinase (EEF2K), which leads to its inhibition and thus activation of EEF2. Also plays a role in feedback regulation of mTORC2 by mTORC1 by phosphorylating MAPKAP1/SIN1, MTOR and RICTOR, resulting in the inhibition of mTORC2 and AKT1 signaling. Also involved in feedback regulation of mTORC1 and mTORC2 by phosphorylating DEPTOR. Mediates cell survival by phosphorylating the pro-apoptotic protein BAD and suppressing its pro-apoptotic function. Phosphorylates mitochondrial URI1 leading to dissociation of a URI1-PPP1CC complex. The free mitochondrial PPP1CC can then dephosphorylate RPS6KB1 at Thr-412, which is proposed to be a negative feedback mechanism for the RPS6KB1 anti-apoptotic function. Mediates TNF-alpha-induced insulin resistance by phosphorylating IRS1 at multiple serine residues, resulting in accelerated degradation of IRS1. In cells lacking functional TSC1-2 complex, constitutively phosphorylates and inhibits GSK3B. May be involved in cytoskeletal rearrangement through binding to neurabin. Phosphorylates and activates the pyrimidine biosynthesis enzyme CAD, downstream of MTOR. Following activation by mTORC1, phosphorylates EPRS and thereby plays a key role in fatty acid uptake by adipocytes and also most probably in interferon-gamma-induced translation inhibition. This is Ribosomal protein S6 kinase beta-1 (RPS6KB1) from Oryctolagus cuniculus (Rabbit).